Consider the following 711-residue polypeptide: MGCTVREKHVKPTRRIKAAAFRSDPPLCWVEKIAMSQSIVENLVYHPGLTDSGSVNLNSVTENPEENFWAYCTEEHLEEILLKHLEFLYNQAVSKLLELGYEERVALKAVLSNGHCYGELDVLTNIVNNSLSYLNSGGGGGGSNGNGEDRTETGFTDLRDLEEYSLAGMIYLLQQVKPNLSKGDAMWCLLMSELHVGRASTLDVPTNRSSCCTKEDSNVEDVGTGGTLDIAGFMAPALCRFHGGWGFGNGGGPEFSGNGFSMKGAELKLQREIDCPKRFNLSPSMKSLLKRNVAAFAAGYRASMKQKQIQSSDTIGDSKACNDPAIVKSCGQQPRKSGSEESVSTVLEKFRDLNLDDNLESVGVDDKDCVIVDLLHQVKDFEKKVKERKEWAQKNAMQAAQKVSEELAELKTLSSEREGIQLLKKGKQAVEESTAKRFTDKEIELRKACSQNDRANVIVRKLENQNAEIRAEREGSKLSASESLKACMEASKKEKKCLKKLVAWEKQILKLQDEITAEKEKIKALYKTLAQITEYEKEIEAKWRQEQKAKEEALAQMEEEQRSKEAAEGHNKRKLETLRLKIELDFQRHKDDHQRLEQELGRLKASSDSDSSHISNNAWKPKKSQGENIAKLLEEIDKLEGSYDNEANYDRECIICMKDEVSVVFLPCAHQVVCGSCSDSFFASNNGGSKVTCPCCRGLVQQRIRIFGATS.

Positions 390 to 648 (EWAQKNAMQA…LEGSYDNEAN (259 aa)) form a coiled coil. Disordered stretches follow at residues 552–571 (EALA…EGHN) and 602–622 (RLKA…WKPK). The span at 602 to 611 (RLKASSDSDS) shows a compositional bias: basic and acidic residues. The RING-type zinc-finger motif lies at 653–697 (CIICMKDEVSVVFLPCAHQVVCGSCSDSFFASNNGGSKVTCPCCR).

As to quaternary structure, interacts (via C-terminal domain) with MND1 and HOP2. Interacts with XRI1 (via C-terminal domain).

This chain is MND1-interacting protein 1 (MIP1), found in Arabidopsis thaliana (Mouse-ear cress).